A 41-amino-acid polypeptide reads, in one-letter code: Large ribosomal subunit protein bL36 (41 aa).

It belongs to the bacterial ribosomal protein bL36 family.

The polypeptide is Large ribosomal subunit protein bL36 (Paracoccus denitrificans (strain Pd 1222)).